The following is a 422-amino-acid chain: Adenylosuccinate synthetase (422 aa).

GTP contacts are provided by residues 11–17 (GDEGKGK) and 39–41 (GHT). Catalysis depends on D12, which acts as the Proton acceptor. Mg(2+) contacts are provided by D12 and G39. Residues 12 to 15 (DEGK), 37 to 40 (NAGH), T129, R143, N219, T234, and R298 contribute to the IMP site. The Proton donor role is filled by H40. Residue 294 to 300 (VTTGRRR) coordinates substrate. Residues R300, 326–328 (KLD), and 409–411 (GTG) contribute to the GTP site.

It belongs to the adenylosuccinate synthetase family. Homodimer. Mg(2+) is required as a cofactor.

The protein resides in the cytoplasm. It catalyses the reaction IMP + L-aspartate + GTP = N(6)-(1,2-dicarboxyethyl)-AMP + GDP + phosphate + 2 H(+). It functions in the pathway purine metabolism; AMP biosynthesis via de novo pathway; AMP from IMP: step 1/2. Functionally, plays an important role in the de novo pathway and in the salvage pathway of purine nucleotide biosynthesis. Catalyzes the first committed step in the biosynthesis of AMP from IMP. This is Adenylosuccinate synthetase from Ajellomyces capsulatus (strain NAm1 / WU24) (Darling's disease fungus).